We begin with the raw amino-acid sequence, 232 residues long: Enolase-phosphatase E1 (232 aa).

Belongs to the HAD-like hydrolase superfamily. MasA/MtnC family. Monomer. Mg(2+) is required as a cofactor.

The catalysed reaction is 5-methylsulfanyl-2,3-dioxopentyl phosphate + H2O = 1,2-dihydroxy-5-(methylsulfanyl)pent-1-en-3-one + phosphate. The protein operates within amino-acid biosynthesis; L-methionine biosynthesis via salvage pathway; L-methionine from S-methyl-5-thio-alpha-D-ribose 1-phosphate: step 3/6. It functions in the pathway amino-acid biosynthesis; L-methionine biosynthesis via salvage pathway; L-methionine from S-methyl-5-thio-alpha-D-ribose 1-phosphate: step 4/6. Its function is as follows. Bifunctional enzyme that catalyzes the enolization of 2,3-diketo-5-methylthiopentyl-1-phosphate (DK-MTP-1-P) into the intermediate 2-hydroxy-3-keto-5-methylthiopentenyl-1-phosphate (HK-MTPenyl-1-P), which is then dephosphorylated to form the acireductone 1,2-dihydroxy-3-keto-5-methylthiopentene (DHK-MTPene). This chain is Enolase-phosphatase E1, found in Xanthomonas axonopodis pv. citri (strain 306).